Consider the following 88-residue polypeptide: Period circadian protein (88 aa).

The segment at 23-88 (VTNTSIAGTG…VTLTESLLNK (66 aa)) is disordered. 16 consecutive repeat copies span residues 30-31 (GT), 33-34 (GT), 35-36 (GT), 37-38 (GT), 39-40 (GT), 41-42 (GT), 43-44 (GT), 45-46 (GT), 47-48 (GT), 49-50 (GT), 51-52 (GT), 53-54 (GT), 55-56 (GT), 57-58 (GT), 59-60 (GT), and 61-62 (GN). Residues 30 to 62 (GTGGTGTGTGTGTGTGTGTGTGTGTGTGTGTGN) are 16 X 2 AA tandem repeats of G-[TN]. The segment covering 30–62 (GTGGTGTGTGTGTGTGTGTGTGTGTGTGTGTGN) has biased composition (gly residues). Residues 79–88 (VTLTESLLNK) show a composition bias toward polar residues.

Forms a heterodimer with timeless (TIM); the complex then translocates into the nucleus. Post-translationally, phosphorylated with a circadian rhythmicity, probably by the double-time protein (dbt). Phosphorylation could be implicated in the stability of per monomer and in the formation of heterodimer per-tim.

Its subcellular location is the nucleus. It localises to the cytoplasm. The protein localises to the perinuclear region. Essential for biological clock functions. Determines the period length of circadian and ultradian rhythms; an increase in PER dosage leads to shortened circadian rhythms and a decrease leads to lengthened circadian rhythms. Essential for the circadian rhythmicity of locomotor activity, eclosion behavior, and for the rhythmic component of the male courtship song that originates in the thoracic nervous system. The biological cycle depends on the rhythmic formation and nuclear localization of the TIM-PER complex. Light induces the degradation of TIM, which promotes elimination of PER. Nuclear activity of the heterodimer coordinatively regulates PER and TIM transcription through a negative feedback loop. Behaves as a negative element in circadian transcriptional loop. Does not appear to bind DNA, suggesting indirect transcriptional inhibition. This Drosophila teissieri (Fruit fly) protein is Period circadian protein (per).